The primary structure comprises 198 residues: Undecaprenyl phosphate transporter A (198 aa).

5 helical membrane-spanning segments follow: residues 15–35 (MGYAGIAIGLMIEIIPSEIVL), 47–67 (IGFIGAIIAGVIGGTIAQIFI), 107–127 (VVFSARFIPVVRHAISIPAGI), 135–155 (FVVLTVLAIIPWSILFVYLGI), and 169–189 (GTYTTPIMILAVVVIALYFVI).

This sequence belongs to the DedA family.

It is found in the cell membrane. In terms of biological role, flippase that catalyzes the transport of undecaprenyl phosphate (UndP) across the cytoplasmic membrane, from the external side to the cytoplasmic side. Is involved in UndP recycling during peptidoglycan synthesis. The sequence is that of Undecaprenyl phosphate transporter A from Bacillus subtilis (strain 168).